Consider the following 1066-residue polypeptide: DNA-directed RNA polymerase subunit beta (1066 aa).

Belongs to the RNA polymerase beta chain family. In terms of assembly, in plastids the minimal PEP RNA polymerase catalytic core is composed of four subunits: alpha, beta, beta', and beta''. When a (nuclear-encoded) sigma factor is associated with the core the holoenzyme is formed, which can initiate transcription.

It localises to the plastid. Its subcellular location is the chloroplast. The catalysed reaction is RNA(n) + a ribonucleoside 5'-triphosphate = RNA(n+1) + diphosphate. Functionally, DNA-dependent RNA polymerase catalyzes the transcription of DNA into RNA using the four ribonucleoside triphosphates as substrates. The chain is DNA-directed RNA polymerase subunit beta from Psilotum nudum (Whisk fern).